A 187-amino-acid polypeptide reads, in one-letter code: Elongation factor P (187 aa).

This sequence belongs to the elongation factor P family.

It localises to the cytoplasm. It participates in protein biosynthesis; polypeptide chain elongation. Involved in peptide bond synthesis. Stimulates efficient translation and peptide-bond synthesis on native or reconstituted 70S ribosomes in vitro. Probably functions indirectly by altering the affinity of the ribosome for aminoacyl-tRNA, thus increasing their reactivity as acceptors for peptidyl transferase. This Helicobacter pylori (strain P12) protein is Elongation factor P.